The following is a 481-amino-acid chain: MLSILPLAYSNFSRILQYFEQLPVVDKMTEEILKQGVGIVETSLTFEPPFCESFERISIDNFPIFALGKEISKEDGIEAMKKYVTSRFWFTYRRDFSPIGGTGPSTDQGWGCMLRCAQMLLGEVLLRRHIGRHFEWDIEKTSEIYEKILQMFFDEKDALYSIHQIAQMGVTEGKEVSKWFGPNTAAQVMKKLTIFDDWSNIAVHVALDNILVKEDAITMATSYPSEDAVKLIMENGLVDKNRLSLSPGNIIPEWRPLLLMIPLRLGLTTINPCYLSAIQEFFKIPQCVGIIGGRPNHALYFVGMSGSKLFYLDPHYCRPKTESTAKMYAEKDSTATTDDVGFSHLEELVPLPSQTADVYTKMDDSTYHCQMMLWIEYENVDPSLALAMFCETRDEFENLCETLQKTTLPASQPPMFEFLQRRPKYLPKFEPYTGVSMKIEMKEFDDIGAANVKIDDDFEVLDVHTEEEDADEDNDDDVANA.

Residue Cys112 is the Nucleophile of the active site. Catalysis depends on residues Asp313 and His315. The interval 462–481 (DVHTEEEDADEDNDDDVANA) is disordered.

This sequence belongs to the peptidase C54 family.

The protein localises to the cytoplasm. It carries out the reaction [protein]-C-terminal L-amino acid-glycyl-phosphatidylethanolamide + H2O = [protein]-C-terminal L-amino acid-glycine + a 1,2-diacyl-sn-glycero-3-phosphoethanolamine. Cysteine protease required for autophagy. Cleaves the C-terminal amino acid of ATG8 family proteins lgg-1, to reveal a C-terminal glycine. Exposure of the glycine at the C-terminus is essential for ATG8 proteins conjugation to phosphatidylethanolamine (PE) and insertion to membranes, which is necessary for autophagy. Its cleavage activity is functionally redundant to atg-4.2, but it cleaves lgg-1 precursors more efficiently than atg-4.2. Acts redundantly with atg-4.2 to promote the lgg-1 delipidation to release the protein from membranes, which facilitates multiple events during macroautophagy. Unlike atg-4.2 does not seem to be required for autophagosome maturation. This is Cysteine protease atg-4.1 from Caenorhabditis elegans.